Reading from the N-terminus, the 68-residue chain is Protein transport protein Sec61 gamma-1 subunit (68 aa).

Over 1–32 (MDKVVKFAEPGRAFAKDSIRLVKRCTKPDRKE) the chain is Cytoplasmic. A helical transmembrane segment spans residues 33 to 61 (FQKIAIATAVGFAIMGFIGFFVKLIHIPI). At 62-68 (NNIIVGS) the chain is on the extracellular side.

It belongs to the SecE/SEC61-gamma family. Heterotrimeric complex composed of SEC61-alpha, SEC61-beta and SEC61-gamma.

Its subcellular location is the endoplasmic reticulum membrane. Necessary for protein translocation in the endoplasmic reticulum. The protein is Protein transport protein Sec61 gamma-1 subunit (SEC61G1) of Drosophila melanogaster (Fruit fly).